The chain runs to 431 residues: Divalent metal cation transporter MntH (431 aa).

A run of 11 helical transmembrane segments spans residues 33 to 53, 61 to 81, 110 to 130, 141 to 161, 170 to 190, 211 to 231, 258 to 278, 307 to 327, 347 to 367, 368 to 388, and 406 to 426; these read LLKF…PGNF, SSFN…AIFL, WIFW…EFIG, IPMI…VYME, TIIA…LFLA, AVLI…IYLH, ILIA…VSAA, GAFG…GTMA, IITM…MRVL, VLSQ…MLLI, and IVGF…LYLT.

The protein belongs to the NRAMP family.

The protein localises to the cell membrane. H(+)-stimulated, divalent metal cation uptake system. The polypeptide is Divalent metal cation transporter MntH (Clostridium acetobutylicum (strain ATCC 824 / DSM 792 / JCM 1419 / IAM 19013 / LMG 5710 / NBRC 13948 / NRRL B-527 / VKM B-1787 / 2291 / W)).